The sequence spans 179 residues: Large ribosomal subunit protein uL5 (179 aa).

The protein belongs to the universal ribosomal protein uL5 family. As to quaternary structure, part of the 50S ribosomal subunit; part of the 5S rRNA/L5/L18/L25 subcomplex. Contacts the 5S rRNA and the P site tRNA. Forms a bridge to the 30S subunit in the 70S ribosome.

Functionally, this is one of the proteins that bind and probably mediate the attachment of the 5S RNA into the large ribosomal subunit, where it forms part of the central protuberance. In the 70S ribosome it contacts protein S13 of the 30S subunit (bridge B1b), connecting the 2 subunits; this bridge is implicated in subunit movement. Contacts the P site tRNA; the 5S rRNA and some of its associated proteins might help stabilize positioning of ribosome-bound tRNAs. The sequence is that of Large ribosomal subunit protein uL5 from Hamiltonella defensa subsp. Acyrthosiphon pisum (strain 5AT).